Consider the following 537-residue polypeptide: Cytochrome P450 monooxygenase ltmQ (537 aa).

Residues 10–30 traverse the membrane as a helical segment; it reads FPKLNFATIVISGATIIGIIF. N-linked (GlcNAc...) asparagine glycans are attached at residues asparagine 182, asparagine 188, and asparagine 310. Heme is bound at residue cysteine 476.

This sequence belongs to the cytochrome P450 family. Heme is required as a cofactor.

Its subcellular location is the membrane. Its pathway is secondary metabolite biosynthesis. Functionally, cytochrome P450 monooxygenase; part of the gene clusters that mediates the biosynthesis of lolitrems, indole-diterpene mycotoxins that are potent tremorgens in mammals, and are synthesized by clavicipitaceous fungal endophytes in association with their grass hosts. The geranylgeranyl diphosphate (GGPP) synthase ltmG is proposed to catalyze the first step in lolitrem biosynthesis. LtmG catalyzes a series of iterative condensations of isopentenyl diphosphate (IPP) with dimethylallyl diphosphate (DMAPP), geranyl diphosphate (GPP), and farnesyl diphosphate (FPP), to form GGPP. GGPP then condenses with indole-3-glycerol phosphate to form 3-geranylgeranylindole, an acyclic intermediate, to be incorporated into paxilline. Either ltmG or ltmC could be responsible for this step, as both are putative prenyl transferases. The FAD-dependent monooxygenase ltmM then catalyzes the epoxidation of the two terminal alkenes of the geranylgeranyl moiety, which is subsequently cyclized by ltmB, to paspaline. The cytochrome P450 monooxygenases ltmQ and ltmP can sequentially oxidize paspaline to terpendole E and terpendole F. Alternatively, ltmP converts paspaline to an intermediate which is oxidized by ltmQ to terpendole F. LtmF, ltmK, ltmE and ltmJ appear to be unique to the epichloe endophytes. The prenyltransferase ltmF is involved in the 27-hydroxyl-O-prenylation. The cytochrome P450 monooxygenase ltmK is required for the oxidative acetal ring formation. The multi-functional prenyltransferase ltmE is required for C20- and C21-prenylations of the indole ring of paspalanes and acts together with the cytochrome P450 monooxygenase ltmJ to yield lolitremanes by multiple oxidations and ring closures. The stereoisomer pairs of lolitriol and lolitrem N or lolitrem B and lolitrem F may be attributed to variations in the way in which ring closure can occur under the action of ltmJ. While the major product of this pathway is lolitrem B, the prenyl transferases and cytochrome P450 monooxygenases identified in this pathway have a remarkable versatility in their regio- and stereo-specificities to generate a diverse range of metabolites that are products of a metabolic grid rather than a linear pathway. In Epichloe festucae var. lolii (Neotyphodium lolii), this protein is Cytochrome P450 monooxygenase ltmQ.